The chain runs to 616 residues: Large ribosomal subunit assembly factor BipA (616 aa).

A tr-type G domain is found at 8–204; sequence KKLRNIAIIA…AIVKHVEPPK (197 aa). Residues 20–25 and 134–137 each bind GTP; these read DHGKTT and NKVD.

It belongs to the TRAFAC class translation factor GTPase superfamily. Classic translation factor GTPase family. BipA subfamily. Monomer.

Its subcellular location is the cytoplasm. It catalyses the reaction GTP + H2O = GDP + phosphate + H(+). A 50S ribosomal subunit assembly protein with GTPase activity, required for 50S subunit assembly at low temperatures, may also play a role in translation. Binds GTP and analogs. Binds the 70S ribosome between the 30S and 50S subunits, in a similar position as ribosome-bound EF-G; it contacts a number of ribosomal proteins, both rRNAs and the A-site tRNA. This Haemophilus influenzae (strain ATCC 51907 / DSM 11121 / KW20 / Rd) protein is Large ribosomal subunit assembly factor BipA.